The chain runs to 115 residues: Aspartate 1-decarboxylase (115 aa).

S25 (schiff-base intermediate with substrate; via pyruvic acid) is an active-site residue. At S25 the chain carries Pyruvic acid (Ser). T57 is a substrate binding site. The Proton donor role is filled by Y58. 71–73 (GAA) serves as a coordination point for substrate.

Belongs to the PanD family. Heterooctamer of four alpha and four beta subunits. It depends on pyruvate as a cofactor. Is synthesized initially as an inactive proenzyme, which is activated by self-cleavage at a specific serine bond to produce a beta-subunit with a hydroxyl group at its C-terminus and an alpha-subunit with a pyruvoyl group at its N-terminus.

It localises to the cytoplasm. The catalysed reaction is L-aspartate + H(+) = beta-alanine + CO2. It participates in cofactor biosynthesis; (R)-pantothenate biosynthesis; beta-alanine from L-aspartate: step 1/1. Its function is as follows. Catalyzes the pyruvoyl-dependent decarboxylation of aspartate to produce beta-alanine. The chain is Aspartate 1-decarboxylase from Campylobacter curvus (strain 525.92).